An 81-amino-acid chain; its full sequence is Photosystem I iron-sulfur center (81 aa).

2 consecutive 4Fe-4S ferredoxin-type domains span residues 2–31 (SHSV…MVPW) and 37–68 (GQIA…VRVY). [4Fe-4S] cluster-binding residues include cysteine 11, cysteine 14, cysteine 17, cysteine 21, cysteine 48, cysteine 51, cysteine 54, and cysteine 58.

In terms of assembly, the cyanobacterial PSI reaction center is composed of one copy each of PsaA,B,C,D,E,F,I,J,K,L,M and X, and forms trimeric complexes. Requires [4Fe-4S] cluster as cofactor.

The protein resides in the cellular thylakoid membrane. It catalyses the reaction reduced [plastocyanin] + hnu + oxidized [2Fe-2S]-[ferredoxin] = oxidized [plastocyanin] + reduced [2Fe-2S]-[ferredoxin]. Functionally, apoprotein for the two 4Fe-4S centers FA and FB of photosystem I (PSI); essential for photochemical activity. FB is the terminal electron acceptor of PSI, donating electrons to ferredoxin. The C-terminus interacts with PsaA/B/D and helps assemble the protein into the PSI complex. Required for binding of PsaD and PsaE to PSI. PSI is a plastocyanin/cytochrome c6-ferredoxin oxidoreductase, converting photonic excitation into a charge separation, which transfers an electron from the donor P700 chlorophyll pair to the spectroscopically characterized acceptors A0, A1, FX, FA and FB in turn. This is Photosystem I iron-sulfur center from Trichodesmium erythraeum (strain IMS101).